A 105-amino-acid polypeptide reads, in one-letter code: MIASKFGIGQQVRHKLLGYLGVVIDIDPEYSMEQPKADEIAANTDLRFAPWYHVVMEDEEGQPVHTYLAEAQLDGEAQEAHPEQPSLDELAESIRHQLQAPRLRN.

The tract at residues 75-105 (GEAQEAHPEQPSLDELAESIRHQLQAPRLRN) is disordered.

The protein belongs to the HspQ family.

The protein resides in the cytoplasm. In terms of biological role, involved in the degradation of certain denaturated proteins, including DnaA, during heat shock stress. This Serratia proteamaculans (strain 568) protein is Heat shock protein HspQ.